The primary structure comprises 298 residues: MDIVLYFVAVPILIVLIVSAVKVRGKTEEDNHEARQEVAAQVVGRLQAEEGSNRLRRRRNLNRMMANRMANSAYREAADNDSPVEVEEEYEEAEQQSQATGKRGAKKQKKLEEKQAKRAQREAELEEREERKRTQELREEERRKEDKKERILEQRQEEEELRAKEEQEKREEEEYLCLKQSFVVEEQGEADELTEQESQNLLQEFIQHIKDCKVVLLEDLASHFGLRTQDAISRLQDLLSDGSITGVIDDRGKFIFITPEEMNVVAQFIRQRGRVSITDLAQASNSLINLIPEIHNTA.

A helical transmembrane segment spans residues 1–21 (MDIVLYFVAVPILIVLIVSAV). Topologically, residues 22–298 (KVRGKTEEDN…NLIPEIHNTA (277 aa)) are cytoplasmic. The interval 71–149 (NSAYREAADN…EERRKEDKKE (79 aa)) is disordered. The span at 82 to 94 (SPVEVEEEYEEAE) shows a compositional bias: acidic residues. A compositionally biased stretch (basic and acidic residues) spans 110-149 (KLEEKQAKRAQREAELEEREERKRTQELREEERRKEDKKE). The UFM1-interacting motif (UFIM) signature appears at 181-195 (SFVVEEQGEADELTE). One can recognise a PCI domain in the interval 215-259 (VLLEDLASHFGLRTQDAISRLQDLLSDGSITGVIDDRGKFIFITP).

This sequence belongs to the DDRGK1 family. As to quaternary structure, component of the UFM1 ribosome E3 ligase (UREL) complex, composed of ufl1, ddrgk1 and cdk5rap3.

The protein localises to the endoplasmic reticulum membrane. Functionally, component of the UFM1 ribosome E3 ligase (UREL) complex, a multiprotein complex that catalyzes ufmylation of endoplasmic reticulum-docked proteins. The UREL complex plays a key role in ribosome recycling by mediating mono-ufmylation of the RPL26/uL24 subunit of the 60S ribosome following ribosome dissociation: ufmylation weakens the junction between post-termination 60S subunits and SEC61 translocons, promoting release and recycling of the large ribosomal subunit from the endoplasmic reticulum membrane. Ufmylation of RPL26/uL24 and subsequent 60S ribosome recycling either take place after normal termination of translation or after ribosome stalling during cotranslational translocation at the endoplasmic reticulum. Within the UREL complex, DDRGK1 tethers the complex to the endoplasmic reticulum membrane to restrict its activity to endoplasmic reticulum-docked ribosomes and acts as an ufmylation 'reader': following RPL26/uL24 ufmylation, DDRGK1 specifically binds to ufmylated RPL26/uL24 via its UFIM motif, resulting in stable association between the 60S ribosome and the UREL complex, followed by dissociation of the 60S ribosome subunit from the endoplasmic reticulum membrane. The UREL complex is also involved in reticulophagy in response to endoplasmic reticulum stress by promoting ufmylation of proteins such as CYB5R3 and RPN1, thereby promoting lysosomal degradation of ufmylated proteins. Required for stabilization and ufmylation of ATG9A. This chain is DDRGK domain-containing protein 1, found in Osmerus mordax (Rainbow smelt).